A 122-amino-acid chain; its full sequence is Small ribosomal subunit protein uS13 (122 aa).

The tract at residues 95 to 122 (GLPVRGQRTKTNARTRKGPKKTIAGKKK) is disordered.

The protein belongs to the universal ribosomal protein uS13 family. As to quaternary structure, part of the 30S ribosomal subunit. Forms a loose heterodimer with protein S19. Forms two bridges to the 50S subunit in the 70S ribosome.

Its function is as follows. Located at the top of the head of the 30S subunit, it contacts several helices of the 16S rRNA. In the 70S ribosome it contacts the 23S rRNA (bridge B1a) and protein L5 of the 50S subunit (bridge B1b), connecting the 2 subunits; these bridges are implicated in subunit movement. Contacts the tRNAs in the A and P-sites. The sequence is that of Small ribosomal subunit protein uS13 from Corynebacterium glutamicum (strain ATCC 13032 / DSM 20300 / JCM 1318 / BCRC 11384 / CCUG 27702 / LMG 3730 / NBRC 12168 / NCIMB 10025 / NRRL B-2784 / 534).